We begin with the raw amino-acid sequence, 140 residues long: Cysteine protease inhibitor 6 (140 aa).

An intrachain disulfide couples Cys103 to Cys109.

Belongs to the protease inhibitor I3 (leguminous Kunitz-type inhibitor) family.

It localises to the vacuole. In terms of biological role, inhibitor of cysteine proteases. May protect the plant by inhibiting proteases of invading organisms. The chain is Cysteine protease inhibitor 6 from Solanum tuberosum (Potato).